The primary structure comprises 217 residues: Urease accessory protein UreG (217 aa).

13-20 (GPVGSGKT) lines the GTP pocket.

It belongs to the SIMIBI class G3E GTPase family. UreG subfamily. In terms of assembly, homodimer. UreD, UreF and UreG form a complex that acts as a GTP-hydrolysis-dependent molecular chaperone, activating the urease apoprotein by helping to assemble the nickel containing metallocenter of UreC. The UreE protein probably delivers the nickel.

The protein resides in the cytoplasm. Functionally, facilitates the functional incorporation of the urease nickel metallocenter. This process requires GTP hydrolysis, probably effectuated by UreG. The polypeptide is Urease accessory protein UreG (Frankia alni (strain DSM 45986 / CECT 9034 / ACN14a)).